Reading from the N-terminus, the 181-residue chain is tRNA-splicing endonuclease (181 aa).

Catalysis depends on residues Tyr118, His126, and Lys157.

Belongs to the tRNA-intron endonuclease family. Archaeal short subfamily. Homotetramer; although the tetramer contains four active sites, only two participate in the cleavage. Therefore, it should be considered as a dimer of dimers.

It carries out the reaction pretRNA = a 3'-half-tRNA molecule with a 5'-OH end + a 5'-half-tRNA molecule with a 2',3'-cyclic phosphate end + an intron with a 2',3'-cyclic phosphate and a 5'-hydroxyl terminus.. In terms of biological role, endonuclease that removes tRNA introns. Cleaves pre-tRNA at the 5'- and 3'-splice sites to release the intron. The products are an intron and two tRNA half-molecules bearing 2',3' cyclic phosphate and 5'-OH termini. Recognizes a pseudosymmetric substrate in which 2 bulged loops of 3 bases are separated by a stem of 4 bp. This Sulfolobus acidocaldarius (strain ATCC 33909 / DSM 639 / JCM 8929 / NBRC 15157 / NCIMB 11770) protein is tRNA-splicing endonuclease.